The sequence spans 122 residues: Large ribosomal subunit protein uL14 (122 aa).

It belongs to the universal ribosomal protein uL14 family. As to quaternary structure, part of the 50S ribosomal subunit. Forms a cluster with proteins L3 and L19. In the 70S ribosome, L14 and L19 interact and together make contacts with the 16S rRNA in bridges B5 and B8.

Its function is as follows. Binds to 23S rRNA. Forms part of two intersubunit bridges in the 70S ribosome. In Levilactobacillus brevis (strain ATCC 367 / BCRC 12310 / CIP 105137 / JCM 1170 / LMG 11437 / NCIMB 947 / NCTC 947) (Lactobacillus brevis), this protein is Large ribosomal subunit protein uL14.